The chain runs to 94 residues: DNA-directed RNA polymerase subunit omega (94 aa).

This sequence belongs to the RNA polymerase subunit omega family. As to quaternary structure, the RNAP catalytic core consists of 2 alpha, 1 beta, 1 beta' and 1 omega subunit. When a sigma factor is associated with the core the holoenzyme is formed, which can initiate transcription.

The catalysed reaction is RNA(n) + a ribonucleoside 5'-triphosphate = RNA(n+1) + diphosphate. Promotes RNA polymerase assembly. Latches the N- and C-terminal regions of the beta' subunit thereby facilitating its interaction with the beta and alpha subunits. The sequence is that of DNA-directed RNA polymerase subunit omega from Bifidobacterium longum (strain DJO10A).